Consider the following 583-residue polypeptide: MTRVEDFFSKQIDFCKRKKKIYLAIVASVLLVAAVIGVVAGVKSHSKNSDDHADIMAISSSAHAIVKSACSNTLHPELCYSAIVNVSDFSKKVTSQKDVIELSLNITVKAVRRNYYAVKELIKTRKGLTPREKVALHDCLETMDETLDELHTAVEDLELYPNKKSLKEHVEDLKTLISSAITNQETCLDGFSHDEADKKVRKVLLKGQKHVEKMCSNALAMICNMTDTDIANEMKLSAPANNRKLVEDNGEWPEWLSAGDRRLLQSSTVTPDVVVAADGSGDYKTVSEAVRKAPEKSSKRYVIRIKAGVYRENVDVPKKKTNIMFMGDGKSNTIITASRNVQDGSTTFHSATVVRVAGKVLARDITFQNTAGASKHQAVALCVGSDLSAFYRCDMLAYQDTLYVHSNRQFFVQCLVAGTVDFIFGNGAAVFQDCDIHARRPGSGQKNMVTAQGRTDPNQNTGIVIQKCRIGATSDLRPVQKSFPTYLGRPWKEYSRTVIMQSSITDVIQPAGWHEWNGNFALDTLFYGEYANTGAGAPTSGRVKWKGHKVITSSTEAQAYTPGRFIAGGSWLSSTGFPFSLGL.

A signal peptide spans 1 to 40 (MTRVEDFFSKQIDFCKRKKKIYLAIVASVLLVAAVIGVVA). Residues 60 to 221 (SSAHAIVKSA…EKMCSNALAM (162 aa)) form a pectinesterase inhibitor U1 region. N-linked (GlcNAc...) asparagine glycosylation is found at Asn85, Asn105, and Asn224. The segment at 272–570 (DVVVAADGSG…TPGRFIAGGS (299 aa)) is pectinesterase U1. The substrate site is built by Thr347 and Gln377. The Proton donor; for pectinesterase activity role is filled by Asp400. An intrachain disulfide couples Cys414 to Cys434. Asp421 acts as the Nucleophile; for pectinesterase activity in catalysis. The substrate site is built by Arg489 and Trp491.

This sequence in the N-terminal section; belongs to the PMEI family. It in the C-terminal section; belongs to the pectinesterase family.

The protein resides in the secreted. Its subcellular location is the cell wall. The enzyme catalyses [(1-&gt;4)-alpha-D-galacturonosyl methyl ester](n) + n H2O = [(1-&gt;4)-alpha-D-galacturonosyl](n) + n methanol + n H(+). It functions in the pathway glycan metabolism; pectin degradation; 2-dehydro-3-deoxy-D-gluconate from pectin: step 1/5. Its function is as follows. Acts in the modification of cell walls via demethylesterification of cell wall pectin. This Solanum lycopersicum (Tomato) protein is Pectinesterase/pectinesterase inhibitor U1 (PMEU1).